Reading from the N-terminus, the 461-residue chain is Cysteine--tRNA ligase (461 aa).

C30 contributes to the Zn(2+) binding site. A 'HIGH' region motif is present at residues 32 to 42 (VTVYDLCHIGH). Residues C211, H236, and E240 each coordinate Zn(2+). The 'KMSKS' region signature appears at 268–272 (KMSKS). K271 provides a ligand contact to ATP.

The protein belongs to the class-I aminoacyl-tRNA synthetase family. In terms of assembly, monomer. Zn(2+) is required as a cofactor.

The protein resides in the cytoplasm. The catalysed reaction is tRNA(Cys) + L-cysteine + ATP = L-cysteinyl-tRNA(Cys) + AMP + diphosphate. This Shewanella sp. (strain MR-7) protein is Cysteine--tRNA ligase.